A 334-amino-acid polypeptide reads, in one-letter code: ABC transporter L-arabinose-binding periplasmic protein (334 aa).

Residues 1–30 form the signal peptide; that stretch reads MNRTIRRHTLRALLAALCIAPLGMQGAARA.

It belongs to the bacterial solute-binding protein 2 family. The complex is composed of two ATP-binding proteins (AraG), two transmembrane proteins (AraH) and a solute-binding protein (AraF).

The protein localises to the periplasm. Part of the ABC transporter complex AraFGH involved in L-arabinose import. Binds with high affinity to L-arabinose. This is ABC transporter L-arabinose-binding periplasmic protein (araF) from Azospirillum brasilense.